A 237-amino-acid chain; its full sequence is Proteasome subunit alpha type-5 (237 aa).

This sequence belongs to the peptidase T1A family. As to quaternary structure, the 26S proteasome consists of a 20S proteasome core and two 19S regulatory subunits. The 20S proteasome core is composed of 28 subunits that are arranged in four stacked rings, resulting in a barrel-shaped structure. The two end rings are each formed by seven alpha subunits, and the two central rings are each formed by seven beta subunits. The catalytic chamber with the active sites is on the inside of the barrel.

The protein localises to the cytoplasm. It is found in the nucleus. The proteasome is a multicatalytic proteinase complex which is characterized by its ability to cleave peptides with Arg, Phe, Tyr, Leu, and Glu adjacent to the leaving group at neutral or slightly basic pH. The proteasome has an ATP-dependent proteolytic activity. This Oryza sativa subsp. japonica (Rice) protein is Proteasome subunit alpha type-5 (PAE1).